We begin with the raw amino-acid sequence, 915 residues long: Hexokinase HKDC1 (915 aa).

Residues 1-20 (MFAVHLVAFYFTKLKEDQIK) are mitochondrial-binding peptide (MBP). Hexokinase domains are found at residues 16-458 (EDQI…MVTA) and 464-903 (QAQR…LITA). ATP is bound by residues Arg-30 and 84 to 89 (DLGGSK). Positions 73–207 (DGSENGEFLS…DLDVDILALV (135 aa)) are hexokinase small subdomain 1. 84-91 (DLGGSKFR) contributes to the D-glucose 6-phosphate binding site. Residues Ser-155, 172–173 (TK), and 208–209 (ND) each bind D-glucose. The segment at 208 to 447 (NDTVGTMMTC…CDVRFLLSES (240 aa)) is hexokinase large subdomain 1. Positions 209 and 232 each coordinate D-glucose 6-phosphate. Residues Asn-235, Glu-260, and 291–294 (QLFE) each bind D-glucose. 413 to 415 (DGT) contacts D-glucose 6-phosphate. 425-426 (KR) contributes to the ATP binding site. D-glucose 6-phosphate-binding positions include Ser-449 and 532-536 (DLGGT). The hexokinase small subdomain 2 stretch occupies residues 521–652 (DGTEKGKFLA…EFDLDIVAIV (132 aa)). 532–537 (DLGGTN) is a binding site for ATP. D-glucose is bound by residues 600 to 601 (SF), 617 to 618 (TK), and 653 to 654 (ND). Residues 653 to 892 (NDTVGTMMTC…CDVTFMLSED (240 aa)) are hexokinase large subdomain 2. 2 residues coordinate D-glucose 6-phosphate: Asp-654 and Thr-677. Thr-677 contributes to the ATP binding site. Residues 679–680 (SN), Glu-705, and Glu-739 each bind D-glucose. Residues 744–745 (GM), 781–785 (TKFLS), and 860–864 (TLYKL) each bind ATP. Residues 858–860 (DGT) and Ser-894 contribute to the D-glucose 6-phosphate site.

This sequence belongs to the hexokinase family. As to expression, widely expressed. Detected in retina, brain, cerebellum, liver, lung, kidney, spleen, pancreas and intestine.

The protein resides in the cytoplasm. The protein localises to the mitochondrion membrane. It localises to the photoreceptor inner segment. The enzyme catalyses a D-hexose + ATP = a D-hexose 6-phosphate + ADP + H(+). The catalysed reaction is D-glucose + ATP = D-glucose 6-phosphate + ADP + H(+). The protein operates within carbohydrate metabolism; hexose metabolism. Its pathway is carbohydrate degradation; glycolysis; D-glyceraldehyde 3-phosphate and glycerone phosphate from D-glucose: step 1/4. Functionally, catalyzes the phosphorylation of hexose to hexose 6-phosphate, although at very low level compared to other hexokinases. Has low glucose phosphorylating activity compared to other hexokinases. Involved in glucose homeostasis and hepatic lipid accumulation. Required to maintain whole-body glucose homeostasis during pregnancy; however additional evidences are required to confirm this role. The protein is Hexokinase HKDC1 of Mus musculus (Mouse).